An 84-amino-acid polypeptide reads, in one-letter code: U1-hexatoxin-Iw1a (84 aa).

The first 18 residues, 1 to 18 (MLKFVVVICLVIMAITFA), serve as a signal peptide directing secretion. Intrachain disulfides connect Cys21–Cys32, Cys26–Cys40, Cys31–Cys66, Cys50–Cys74, and Cys68–Cys81.

Belongs to the MIT-like AcTx family. Expressed by the venom gland.

The protein localises to the secreted. The polypeptide is U1-hexatoxin-Iw1a (Illawarra wisharti (Illawarra funnel-web spider)).